The primary structure comprises 208 residues: Outer-membrane lipoprotein carrier protein (208 aa).

The N-terminal stretch at 1-22 (MLKPLSQLVCALPLVVAASSYA) is a signal peptide.

This sequence belongs to the LolA family. As to quaternary structure, monomer.

Its subcellular location is the periplasm. Functionally, participates in the translocation of lipoproteins from the inner membrane to the outer membrane. Only forms a complex with a lipoprotein if the residue after the N-terminal Cys is not an aspartate (The Asp acts as a targeting signal to indicate that the lipoprotein should stay in the inner membrane). In Shewanella loihica (strain ATCC BAA-1088 / PV-4), this protein is Outer-membrane lipoprotein carrier protein.